The chain runs to 402 residues: Tryptophan synthase beta chain (402 aa).

At K91 the chain carries N6-(pyridoxal phosphate)lysine.

The protein belongs to the TrpB family. As to quaternary structure, tetramer of two alpha and two beta chains. It depends on pyridoxal 5'-phosphate as a cofactor.

The enzyme catalyses (1S,2R)-1-C-(indol-3-yl)glycerol 3-phosphate + L-serine = D-glyceraldehyde 3-phosphate + L-tryptophan + H2O. It functions in the pathway amino-acid biosynthesis; L-tryptophan biosynthesis; L-tryptophan from chorismate: step 5/5. Its function is as follows. The beta subunit is responsible for the synthesis of L-tryptophan from indole and L-serine. This is Tryptophan synthase beta chain from Streptococcus thermophilus (strain ATCC BAA-250 / LMG 18311).